Reading from the N-terminus, the 222-residue chain is MDLPPTNDFCADPTVALRQRMVKQQIIARGVNDPAVLAALQQVPRHRFVPDSLQNLAYADQPLTIGYGQTISQPYIVAYMTEAAHLTPSSKVLEIGTGCGYQAAILAEIAQEVFTVEVVPELARQARDRLEALGYQNIHYKIGDGYQGWSEFAPYDAILVTAAPDHRPQPLLQQLAVGGHLVIPVGTVGQRLEVLHKTSTDLEMEKAIAVRFVPLQGHSYGF.

Ser-72 is an active-site residue.

It belongs to the methyltransferase superfamily. L-isoaspartyl/D-aspartyl protein methyltransferase family.

It is found in the cytoplasm. The enzyme catalyses [protein]-L-isoaspartate + S-adenosyl-L-methionine = [protein]-L-isoaspartate alpha-methyl ester + S-adenosyl-L-homocysteine. In terms of biological role, catalyzes the methyl esterification of L-isoaspartyl residues in peptides and proteins that result from spontaneous decomposition of normal L-aspartyl and L-asparaginyl residues. It plays a role in the repair and/or degradation of damaged proteins. The sequence is that of Protein-L-isoaspartate O-methyltransferase from Picosynechococcus sp. (strain ATCC 27264 / PCC 7002 / PR-6) (Agmenellum quadruplicatum).